A 349-amino-acid chain; its full sequence is MKLNVSFPATGAQKTFEVMDDHKLRHFYDKRMGAEITADHLGDEWKGYVFKIAGGNDKQGFPMKQGVLTNTRVRLLLKKGHSCYRPRRTGERKRKSVRGCIVDQNLSALALIVVKKGEKDIPGLTDTTVLRRLGPKRASNIRKLYNLTKEDDVRQYVVKRPLPEKDGKKPRTKAPKIQRLITPVVLQRKRHRLAIKKRRVESRKEAEAEYMKILHLRRRQERIRRRSRLSSMRDSRSSIGEERDKEKEKAAVKAAKKVAKKEAKKEVKKVTEAAKKADAKAAKAKVEPKKADKKSADSGKKATAGDKKEKKVEKKAAPAAAKKEAPKRKPEAAKGDASAAKKEKKQKKK.

The disordered stretch occupies residues 224-349 (RRRSRLSSMR…AKKEKKQKKK (126 aa)). Composition is skewed to basic and acidic residues over residues 231-251 (SMRD…EKAA) and 260-334 (KKEA…EAAK).

Belongs to the eukaryotic ribosomal protein eS6 family. Component of the small ribosomal subunit. Part of the small subunit (SSU) processome, composed of more than 70 proteins and the RNA chaperone small nucleolar RNA (snoRNA) U3. In terms of processing, ribosomal protein S6 is the major substrate of protein kinases in eukaryote ribosomes.

The protein resides in the cytoplasm. The protein localises to the nucleus. Its subcellular location is the nucleolus. In terms of biological role, component of the 40S small ribosomal subunit. Plays an important role in controlling cell growth and proliferation through the selective translation of particular classes of mRNA. Part of the small subunit (SSU) processome, first precursor of the small eukaryotic ribosomal subunit. During the assembly of the SSU processome in the nucleolus, many ribosome biogenesis factors, an RNA chaperone and ribosomal proteins associate with the nascent pre-rRNA and work in concert to generate RNA folding, modifications, rearrangements and cleavage as well as targeted degradation of pre-ribosomal RNA by the RNA exosome. This is Small ribosomal subunit protein eS6 (RpS6) from Aedes albopictus (Asian tiger mosquito).